We begin with the raw amino-acid sequence, 358 residues long: Insulin gene enhancer protein isl-2b (358 aa).

LIM zinc-binding domains follow at residues C27 to D80 and C89 to H143. A DNA-binding region (homeobox) is located at residues T191 to S250. The span at E325 to S335 shows a compositional bias: low complexity. The interval E325–T358 is disordered. A compositionally biased stretch (polar residues) spans D336–T358.

It is found in the nucleus. Binds to one of the cis-acting domain of the insulin gene enhancer. May be involved in the regional specification of the myotome and also in target recognition by the caudal primary neuron. The polypeptide is Insulin gene enhancer protein isl-2b (isl2b) (Danio rerio (Zebrafish)).